A 241-amino-acid polypeptide reads, in one-letter code: Deoxyribose-phosphate aldolase (241 aa).

Catalysis depends on aspartate 95, which acts as the Proton donor/acceptor. The active-site Schiff-base intermediate with acetaldehyde is lysine 159. The active-site Proton donor/acceptor is lysine 188.

This sequence belongs to the DeoC/FbaB aldolase family. DeoC type 1 subfamily.

The protein resides in the cytoplasm. It catalyses the reaction 2-deoxy-D-ribose 5-phosphate = D-glyceraldehyde 3-phosphate + acetaldehyde. It functions in the pathway carbohydrate degradation; 2-deoxy-D-ribose 1-phosphate degradation; D-glyceraldehyde 3-phosphate and acetaldehyde from 2-deoxy-alpha-D-ribose 1-phosphate: step 2/2. Functionally, catalyzes a reversible aldol reaction between acetaldehyde and D-glyceraldehyde 3-phosphate to generate 2-deoxy-D-ribose 5-phosphate. The protein is Deoxyribose-phosphate aldolase of Rhodopirellula baltica (strain DSM 10527 / NCIMB 13988 / SH1).